We begin with the raw amino-acid sequence, 679 residues long: Methionine--tRNA ligase (679 aa).

The short motif at 14–24 (PYANGSIHLGH) is the 'HIGH' region element. Zn(2+) is bound by residues Cys145, Cys148, Cys158, and Cys161. A 'KMSKS' region motif is present at residues 331 to 335 (KMSKS). Lys334 is an ATP binding site. A tRNA-binding domain is found at 577 to 679 (AFAAVDLRIA…SGAKPGQRVK (103 aa)).

The protein belongs to the class-I aminoacyl-tRNA synthetase family. MetG type 1 subfamily. As to quaternary structure, homodimer. Zn(2+) is required as a cofactor.

It is found in the cytoplasm. It catalyses the reaction tRNA(Met) + L-methionine + ATP = L-methionyl-tRNA(Met) + AMP + diphosphate. In terms of biological role, is required not only for elongation of protein synthesis but also for the initiation of all mRNA translation through initiator tRNA(fMet) aminoacylation. This is Methionine--tRNA ligase from Pseudomonas paraeruginosa (strain DSM 24068 / PA7) (Pseudomonas aeruginosa (strain PA7)).